The primary structure comprises 352 residues: MKLILNKEGAVEFYIPDPQTYRSIYSAPVFYNPSMEKNRTLSVLLLKTYGSGLTVCEPLSGTGIRGIRYAIESNAVGRLILNDISKEAVELIKKNLELNGVEGEVYNEDANVLLHKLRNTCDVVDIDPFGSPAPFLHAAFRALRDEGLICVTATDTAVLVGRYPRKCFRRYNSVIRRTPFYIELGLRNLVGYVARVAASEDFSIQPVFSYWENHYFRTCALATRGAREADDSLNNLGYIWYLKKRRKIVQTLDEHSSGPLWIGPLGDPLVVHKMSQYGVYSVFLQTLEMEYSIQAPWYFRLPEFAVDGKSPTLEKTLELLRRGGIYATRTHMSYDGFKAEANYDEIARILSI.

A Trm1 methyltransferase domain is found at 4–350 (ILNKEGAVEF…ANYDEIARIL (347 aa)). Arg-39, Arg-65, Asp-83, Asp-109, and Ala-110 together coordinate S-adenosyl-L-methionine.

It belongs to the class I-like SAM-binding methyltransferase superfamily. Trm1 family.

It catalyses the reaction guanosine(26) in tRNA + 2 S-adenosyl-L-methionine = N(2)-dimethylguanosine(26) in tRNA + 2 S-adenosyl-L-homocysteine + 2 H(+). Its function is as follows. Dimethylates a single guanine residue at position 26 of a number of tRNAs using S-adenosyl-L-methionine as donor of the methyl groups. This chain is tRNA (guanine(26)-N(2))-dimethyltransferase, found in Pyrobaculum islandicum (strain DSM 4184 / JCM 9189 / GEO3).